The following is a 347-amino-acid chain: GMP reductase (347 aa).

NADP(+) is bound at residue 108–131 (ADFEKTKQILDLNPALNFVCIDVA). Residues G181 and G183 each contribute to the K(+) site. Residue C186 is the Thioimidate intermediate of the active site. 216–239 (IISDGGCTTPGDVAKAFGGGADFV) contacts NADP(+).

It belongs to the IMPDH/GMPR family. GuaC type 1 subfamily. In terms of assembly, homotetramer.

It catalyses the reaction IMP + NH4(+) + NADP(+) = GMP + NADPH + 2 H(+). Its function is as follows. Catalyzes the irreversible NADPH-dependent deamination of GMP to IMP. It functions in the conversion of nucleobase, nucleoside and nucleotide derivatives of G to A nucleotides, and in maintaining the intracellular balance of A and G nucleotides. In Escherichia coli O157:H7, this protein is GMP reductase.